Consider the following 582-residue polypeptide: MEPSKLFTISDNATFAPGPVNNAADKKTFRTCFRILVLSVQAVTLILVIVTLGELVRMINDQGLSNQLSSITDKIRESATMIASAVGVMNQVIHGVTVSLPLQIEGNQNQLLSTLATICTSKKQISNCSTNIPLVNDLRFINGINKFIIEDYANHDFSIGHPLNMPSFIPTATSPNGCTRIPSFSLGKTHWCYTHNVINANCKDHTSSNQYVSMGILVQTASGYPMFKTLKIQYLSDGLNRKSCSIATVPDGCAMYCYVSTQLETDDYAGSSPPTQKLTLLFYNDTVTERTISPSGLEGNWATLVPGVGSGIYFENKLIFPAYGGVLPNSTLGVKLAREFFRPVNPYNPCSGPQQDLDQRALRSYFPSYLSNRRVQSAFLVCAWNQILVTNCELVVPSNNQTLMGAEGRVLLINNRLLYYQRSTSWWPYELLYEISFTFTNSGQSSVNMSWIPIYSFTRPGSGKCSGENVCPIACVSGVYLDPWPLTPYSHQSGINRNFYFTGALLNSSTTRVNPTLYVSALNNLKVLAPYGTQGLSASYTTTTCFQDTGDASVYCVYIMELASNIVGEFQILPVLTRLTIT.

Residues Met1 to Arg34 are Intravirion-facing. A helical; Signal-anchor for type II membrane protein transmembrane segment spans residues Ile35–Leu55. Residues Val56–Thr582 lie on the Virion surface side of the membrane. Asn127 carries an N-linked (GlcNAc...) asparagine; by host glycan. 3 disulfide bridges follow: Cys178–Cys202, Cys192–Cys253, and Cys244–Cys257. An involved in neuraminidase activity region spans residues Asn240 to Ser245. N-linked (GlcNAc...) asparagine; by host glycans are attached at residues Asn284 and Asn329. 3 disulfide bridges follow: Cys350–Cys471, Cys382–Cys392, and Cys465–Cys475. 2 N-linked (GlcNAc...) asparagine; by host glycosylation sites follow: Asn400 and Asn448. N-linked (GlcNAc...) asparagine; by host glycosylation is present at Asn507. The cysteines at positions 545 and 556 are disulfide-linked.

It belongs to the paramyxoviruses hemagglutinin-neuraminidase family. As to quaternary structure, homotetramer; composed of disulfide-linked homodimers. Interacts with F protein trimer.

It is found in the virion membrane. Its subcellular location is the host cell membrane. The enzyme catalyses Hydrolysis of alpha-(2-&gt;3)-, alpha-(2-&gt;6)-, alpha-(2-&gt;8)- glycosidic linkages of terminal sialic acid residues in oligosaccharides, glycoproteins, glycolipids, colominic acid and synthetic substrates.. Attaches the virus to alpha-2,3-linked sialic acid-containing cell receptors and thereby initiating infection. Binding of HN protein to the receptor induces a conformational change that allows the F protein to trigger virion/cell membranes fusion. Binds to the glycan motifs sialyl Lewis (SLe) and GM2 ganglioside (GM2-glycan). In terms of biological role, neuraminidase activity ensures the efficient spread of the virus by dissociating the mature virions from the neuraminic acid containing glycoproteins. The sequence is that of Hemagglutinin-neuraminidase (HN) from Mumps virus (strain RW) (MuV).